The sequence spans 520 residues: Cholesterol side-chain cleavage enzyme, mitochondrial (520 aa).

Residues 1 to 36 constitute a mitochondrion transit peptide; it reads MLAKGLSLRSVLAKGCQPFLSPTWQSSVLATGGGAN. Cys-458 contacts heme.

Belongs to the cytochrome P450 family. As to quaternary structure, interacts with FDX1/adrenodoxin. Requires heme as cofactor.

The protein resides in the mitochondrion inner membrane. The catalysed reaction is 6 reduced [adrenodoxin] + cholesterol + 3 O2 + 6 H(+) = 4-methylpentanal + pregnenolone + 6 oxidized [adrenodoxin] + 4 H2O. It catalyses the reaction 2 reduced [adrenodoxin] + cholesterol + O2 + 2 H(+) = (22R)-hydroxycholesterol + 2 oxidized [adrenodoxin] + H2O. The enzyme catalyses (22R)-hydroxycholesterol + 2 reduced [adrenodoxin] + O2 + 2 H(+) = (20R,22R)-20,22-dihydroxycholesterol + 2 oxidized [adrenodoxin] + H2O. It carries out the reaction (20R,22R)-20,22-dihydroxycholesterol + 2 reduced [adrenodoxin] + O2 + 2 H(+) = 4-methylpentanal + pregnenolone + 2 oxidized [adrenodoxin] + 2 H2O. It participates in lipid metabolism; C21-steroid hormone metabolism. Its pathway is steroid metabolism; cholesterol metabolism. Functionally, a cytochrome P450 monooxygenase that catalyzes the side-chain hydroxylation and cleavage of cholesterol to pregnenolone, the precursor of most steroid hormones. Catalyzes three sequential oxidation reactions of cholesterol, namely the hydroxylation at C22 followed with the hydroxylation at C20 to yield 20R,22R-hydroxycholesterol that is further cleaved between C20 and C22 to yield the C21-steroid pregnenolone and 4-methylpentanal. Mechanistically, uses molecular oxygen inserting one oxygen atom into a substrate and reducing the second into a water molecule. Two electrons are provided by NADPH via a two-protein mitochondrial transfer system comprising flavoprotein FDXR (adrenodoxin/ferredoxin reductase) and nonheme iron-sulfur protein FDX1 or FDX2 (adrenodoxin/ferredoxin). The polypeptide is Cholesterol side-chain cleavage enzyme, mitochondrial (CYP11A1) (Mesocricetus auratus (Golden hamster)).